Reading from the N-terminus, the 290-residue chain is Pirin (290 aa).

The Fe cation site is built by His-56, His-58, His-101, and Glu-103.

Belongs to the pirin family. In terms of assembly, may interact with NF1/CTF1. Interacts with BCL3. Identified in a complex comprised of PIR, BLC3, NFKB1 and target DNA. Fe cation serves as cofactor. In terms of tissue distribution, weakly expressed in bone marrow.

The protein localises to the nucleus. Its subcellular location is the cytoplasm. It catalyses the reaction quercetin + O2 = 2-(3,4-dihydroxybenzoyloxy)-4,6-dihydroxybenzoate + CO. Its pathway is flavonoid metabolism; quercetin degradation. In terms of biological role, transcriptional coregulator of NF-kappa-B which facilitates binding of NF-kappa-B proteins to target kappa-B genes in a redox-state-dependent manner. May be required for efficient terminal myeloid maturation of hematopoietic cells. Has quercetin 2,3-dioxygenase activity (in vitro). The chain is Pirin (Pir) from Mus musculus (Mouse).